Consider the following 224-residue polypeptide: Polysialic acid transport ATP-binding protein KpsT (224 aa).

The ABC transporter domain maps to 2–223 (IKIENLTKSY…EYKMYQDLDI (222 aa)). Residue 38 to 45 (GRNGAGKS) participates in ATP binding.

It belongs to the ABC transporter superfamily.

Its subcellular location is the cell inner membrane. Its function is as follows. Putative ATP-binding protein, and an energy coupling component for the transport of polysialic acid across the cytoplasmic membrane. This Escherichia coli protein is Polysialic acid transport ATP-binding protein KpsT (kpsT).